We begin with the raw amino-acid sequence, 141 residues long: Auxin-responsive protein SAUR64 (141 aa).

It belongs to the ARG7 family.

Its subcellular location is the cell membrane. May promote auxin-stimulated organ elongation, such as hypocotyls, stamen filaments and petals. This is Auxin-responsive protein SAUR64 from Arabidopsis thaliana (Mouse-ear cress).